Here is a 190-residue protein sequence, read N- to C-terminus: Holliday junction branch migration complex subunit RuvA (190 aa).

Positions 1-65 are domain I; the sequence is MIGTLSGTVE…DGVSQLYGFA (65 aa). Residues 66-137 are domain II; that stretch reads NREEQNCMRM…LTPQVQKFEL (72 aa). Positions 137–141 are flexible linker; sequence LNRFA. Residues 142–190 are domain III; that stretch reads ATTRTDSEAVAALLSLGYERTAALGALQKVGVCDSTEDAVRRALLELSK.

This sequence belongs to the RuvA family. In terms of assembly, homotetramer. Forms an RuvA(8)-RuvB(12)-Holliday junction (HJ) complex. HJ DNA is sandwiched between 2 RuvA tetramers; dsDNA enters through RuvA and exits via RuvB. An RuvB hexamer assembles on each DNA strand where it exits the tetramer. Each RuvB hexamer is contacted by two RuvA subunits (via domain III) on 2 adjacent RuvB subunits; this complex drives branch migration. In the full resolvosome a probable DNA-RuvA(4)-RuvB(12)-RuvC(2) complex forms which resolves the HJ.

The protein localises to the cytoplasm. In terms of biological role, the RuvA-RuvB-RuvC complex processes Holliday junction (HJ) DNA during genetic recombination and DNA repair, while the RuvA-RuvB complex plays an important role in the rescue of blocked DNA replication forks via replication fork reversal (RFR). RuvA specifically binds to HJ cruciform DNA, conferring on it an open structure. The RuvB hexamer acts as an ATP-dependent pump, pulling dsDNA into and through the RuvAB complex. HJ branch migration allows RuvC to scan DNA until it finds its consensus sequence, where it cleaves and resolves the cruciform DNA. The protein is Holliday junction branch migration complex subunit RuvA of Anaplasma marginale (strain Florida).